The following is a 144-amino-acid chain: Cell division protein SepF (144 aa).

The protein belongs to the SepF family. In terms of assembly, homodimer. Interacts with FtsZ.

Its subcellular location is the cytoplasm. In terms of biological role, cell division protein that is part of the divisome complex and is recruited early to the Z-ring. Probably stimulates Z-ring formation, perhaps through the cross-linking of FtsZ protofilaments. Its function overlaps with FtsA. In Oceanobacillus iheyensis (strain DSM 14371 / CIP 107618 / JCM 11309 / KCTC 3954 / HTE831), this protein is Cell division protein SepF.